Consider the following 358-residue polypeptide: MLYHLLYPLHEQFSVLYIFRYITFRAIYATITALMIAFILGPWLIDKLSRLQIGQSIRKDGPQSHFKKEGTPTMGGTLILLAIVLPTLLWTDLTNVYVWVTLLVTVGFGAVGFVDDYRKVKLRNSAGLSARQKMLWLMLIAGTAGVMLYSYPPFQTTLAFPFFKGLRPELGLFYIPFAVLVIVGASNAVNLTDGLDGLAIGPTIIASGTYLLFAYLAGNARLAEYLQISSVQGAGELAVLCGAMVGAGLGFLWFNTYPAQVFMGDVGSLSLGGALGTIAVITKQEIVLVIVGGIFVVEALSVIVQVSSFKLLGKRIFRMAPIHHHFELKGWAEPKIIVRFWIISIILALVALSTLKLR.

A run of 10 helical transmembrane segments spans residues 26–46 (AIYATITALMIAFILGPWLID), 70–90 (GTPTMGGTLILLAIVLPTLLW), 94–114 (TNVYVWVTLLVTVGFGAVGFV), 134–154 (MLWLMLIAGTAGVMLYSYPPF), 169–189 (ELGLFYIPFAVLVIVGASNAV), 197–217 (GLAIGPTIIASGTYLLFAYLA), 234–254 (AGELAVLCGAMVGAGLGFLWF), 261–281 (VFMGDVGSLSLGGALGTIAVI), 286–306 (IVLVIVGGIFVVEALSVIVQV), and 335–355 (KIIVRFWIISIILALVALSTL).

It belongs to the glycosyltransferase 4 family. MraY subfamily. It depends on Mg(2+) as a cofactor.

Its subcellular location is the cell inner membrane. It carries out the reaction UDP-N-acetyl-alpha-D-muramoyl-L-alanyl-gamma-D-glutamyl-meso-2,6-diaminopimeloyl-D-alanyl-D-alanine + di-trans,octa-cis-undecaprenyl phosphate = di-trans,octa-cis-undecaprenyl diphospho-N-acetyl-alpha-D-muramoyl-L-alanyl-D-glutamyl-meso-2,6-diaminopimeloyl-D-alanyl-D-alanine + UMP. Its pathway is cell wall biogenesis; peptidoglycan biosynthesis. Catalyzes the initial step of the lipid cycle reactions in the biosynthesis of the cell wall peptidoglycan: transfers peptidoglycan precursor phospho-MurNAc-pentapeptide from UDP-MurNAc-pentapeptide onto the lipid carrier undecaprenyl phosphate, yielding undecaprenyl-pyrophosphoryl-MurNAc-pentapeptide, known as lipid I. The sequence is that of Phospho-N-acetylmuramoyl-pentapeptide-transferase from Syntrophotalea carbinolica (strain DSM 2380 / NBRC 103641 / GraBd1) (Pelobacter carbinolicus).